A 372-amino-acid chain; its full sequence is Ligninase H2 (372 aa).

Positions 1–21 (MAFKQLLAALSVALTLQVTQA) are cleaved as a signal peptide. A propeptide spanning residues 22–28 (APNLDKR) is cleaved from the precursor. 4 disulfide bridges follow: Cys-31–Cys-44, Cys-43–Cys-314, Cys-63–Cys-149, and Cys-278–Cys-344. Catalysis depends on His-76, which acts as the Proton acceptor. 4 residues coordinate Ca(2+): Asp-77, Gly-95, Asp-97, and Ser-99. Residue His-205 coordinates heme b. The Ca(2+) site is built by Ser-206, Asp-223, Thr-225, Gln-228, and Asp-230. An N-linked (GlcNAc...) asparagine glycan is attached at Asn-286.

This sequence belongs to the peroxidase family. Ligninase subfamily. Heme b serves as cofactor. Requires Ca(2+) as cofactor.

The enzyme catalyses 1-(3,4-dimethoxyphenyl)-2-(2-methoxyphenoxy)propane-1,3-diol + H2O2 = 3,4-dimethoxybenzaldehyde + guaiacol + glycolaldehyde + H2O. It catalyses the reaction 2 (3,4-dimethoxyphenyl)methanol + H2O2 = 2 (3,4-dimethoxyphenyl)methanol radical + 2 H2O. The protein operates within secondary metabolite metabolism; lignin degradation. Depolymerization of lignin. Catalyzes the C(alpha)-C(beta) cleavage of the propyl side chains of lignin. In Phanerodontia chrysosporium (White-rot fungus), this protein is Ligninase H2 (GLG4).